A 486-amino-acid polypeptide reads, in one-letter code: Ribulose bisphosphate carboxylase large chain (486 aa).

Substrate-binding residues include Asn125 and Thr175. The active-site Proton acceptor is the Lys177. A substrate-binding site is contributed by Lys179. Mg(2+) contacts are provided by Lys203, Asp205, and Glu206. Lys203 carries the N6-carboxylysine modification. The active-site Proton acceptor is His295. Residues Arg296, His328, and Ser380 each coordinate substrate.

Belongs to the RuBisCO large chain family. Type I subfamily. In terms of assembly, heterohexadecamer of 8 large chains and 8 small chains. Mg(2+) is required as a cofactor.

It carries out the reaction 2 (2R)-3-phosphoglycerate + 2 H(+) = D-ribulose 1,5-bisphosphate + CO2 + H2O. It catalyses the reaction D-ribulose 1,5-bisphosphate + O2 = 2-phosphoglycolate + (2R)-3-phosphoglycerate + 2 H(+). RuBisCO catalyzes two reactions: the carboxylation of D-ribulose 1,5-bisphosphate, the primary event in carbon dioxide fixation, as well as the oxidative fragmentation of the pentose substrate. Both reactions occur simultaneously and in competition at the same active site. The protein is Ribulose bisphosphate carboxylase large chain of Bradyrhizobium diazoefficiens (strain JCM 10833 / BCRC 13528 / IAM 13628 / NBRC 14792 / USDA 110).